The sequence spans 355 residues: Protein RecA (355 aa).

67-74 (GPESSGKT) provides a ligand contact to ATP.

Belongs to the RecA family.

Its subcellular location is the cytoplasm. Its function is as follows. Can catalyze the hydrolysis of ATP in the presence of single-stranded DNA, the ATP-dependent uptake of single-stranded DNA by duplex DNA, and the ATP-dependent hybridization of homologous single-stranded DNAs. It interacts with LexA causing its activation and leading to its autocatalytic cleavage. This is Protein RecA from Shewanella amazonensis (strain ATCC BAA-1098 / SB2B).